Consider the following 867-residue polypeptide: Protein translocase subunit SecA (867 aa).

ATP-binding positions include Gln-86, 104–108 (GEGKT), and Asp-499. Zn(2+) is bound by residues Cys-848, Cys-850, Cys-859, and His-860.

The protein belongs to the SecA family. Monomer and homodimer. Part of the essential Sec protein translocation apparatus which comprises SecA, SecYEG and auxiliary proteins SecDF-YajC and YidC. Zn(2+) is required as a cofactor.

It localises to the cell membrane. The protein resides in the cytoplasm. It catalyses the reaction ATP + H2O + cellular proteinSide 1 = ADP + phosphate + cellular proteinSide 2.. Its function is as follows. Part of the Sec protein translocase complex. Interacts with the SecYEG preprotein conducting channel. Has a central role in coupling the hydrolysis of ATP to the transfer of proteins into and across the cell membrane, serving both as a receptor for the preprotein-SecB complex and as an ATP-driven molecular motor driving the stepwise translocation of polypeptide chains across the membrane. The chain is Protein translocase subunit SecA from Wolbachia sp. subsp. Brugia malayi (strain TRS).